Here is a 243-residue protein sequence, read N- to C-terminus: MKYMENNNTSHSKHPFIIGVTGGTASGKTTVCDEIMKRLENKRIAIICLDSFYRPLSKEDRETVASYNFDHPDAFDWSLVENALRDLKDGKDIEIPTYCFKSHSRLEETVGLGDVDVILFEGILSFYTQSLREQMDIKIFVDTDSDTRLSRRVMRDIAERGRSLEGVLYQYEKFVKPAFDDYILPTKKHADVIIPRGADNVVAIDLIVQHISSKLSEKESFRKSQGQLNVNGGSNTASSVNHA.

ATP is bound at residue 22-29 (GGTASGKT).

The protein belongs to the uridine kinase family.

It catalyses the reaction uridine + ATP = UMP + ADP + H(+). The enzyme catalyses cytidine + ATP = CMP + ADP + H(+). It participates in pyrimidine metabolism; CTP biosynthesis via salvage pathway; CTP from cytidine: step 1/3. It functions in the pathway pyrimidine metabolism; UMP biosynthesis via salvage pathway; UMP from uridine: step 1/1. In terms of biological role, catalyzes the conversion of uridine into uridine monophosphate and cytidine into cytidine monophosphate in the pyrimidine salvage pathway. The protein is Uridine-cytidine kinase B (udkB) of Dictyostelium discoideum (Social amoeba).